A 325-amino-acid chain; its full sequence is Ribosomal RNA small subunit methyltransferase H (325 aa).

S-adenosyl-L-methionine-binding positions include 38 to 40 (GGY), Asp55, Phe82, Asp103, and Gln110. 2 disordered regions span residues 256 to 275 (SGGD…AARA) and 281 to 307 (PARK…RSAV).

This sequence belongs to the methyltransferase superfamily. RsmH family.

Its subcellular location is the cytoplasm. It catalyses the reaction cytidine(1402) in 16S rRNA + S-adenosyl-L-methionine = N(4)-methylcytidine(1402) in 16S rRNA + S-adenosyl-L-homocysteine + H(+). Specifically methylates the N4 position of cytidine in position 1402 (C1402) of 16S rRNA. The polypeptide is Ribosomal RNA small subunit methyltransferase H (Sphingopyxis alaskensis (strain DSM 13593 / LMG 18877 / RB2256) (Sphingomonas alaskensis)).